We begin with the raw amino-acid sequence, 560 residues long: Protein yellow (560 aa).

The first 30 residues, 1 to 30 (MHVQDKGGIGALTALSLLLVAVTMVTPTQA), serve as a signal peptide directing secretion. N-linked (GlcNAc...) asparagine glycosylation is found at Asn-153 and Asn-224. Residues 452–492 (QYRPVLPQKPQTSWGPSPPSRSYLPSLGASPGGPGQVVSSV) are disordered. Low complexity predominate over residues 471-480 (SRSYLPSLGA).

It belongs to the major royal jelly protein family.

It is found in the secreted. Its function is as follows. Controls the pigmentation pattern of the adult cuticle and larval mouth parts. This Drosophila pseudoobscura pseudoobscura (Fruit fly) protein is Protein yellow (y).